The primary structure comprises 505 residues: Bifunctional pantoate ligase/cytidylate kinase (505 aa).

Residues 1-268 (MHQWRKHQQS…CGETRLIDHT (268 aa)) are pantoate--beta-alanine ligase. Position 18–25 (18–25 (MGALHRGH)) interacts with ATP. Catalysis depends on His-25, which acts as the Proton donor. Gln-53 provides a ligand contact to (R)-pantoate. Beta-alanine is bound at residue Gln-53. 142-145 (GEKD) is an ATP binding site. Gln-148 provides a ligand contact to (R)-pantoate. ATP contacts are provided by residues Val-171 and 179-182 (CSSR). The segment at 269–505 (FLMSRQPIVA…PEEVWPTAGR (237 aa)) is cytidylate kinase.

In the N-terminal section; belongs to the pantothenate synthetase family. This sequence in the C-terminal section; belongs to the cytidylate kinase family. Type 1 subfamily.

It localises to the cytoplasm. The catalysed reaction is (R)-pantoate + beta-alanine + ATP = (R)-pantothenate + AMP + diphosphate + H(+). It catalyses the reaction CMP + ATP = CDP + ADP. The enzyme catalyses dCMP + ATP = dCDP + ADP. The protein operates within cofactor biosynthesis; (R)-pantothenate biosynthesis; (R)-pantothenate from (R)-pantoate and beta-alanine: step 1/1. Its function is as follows. Catalyzes the condensation of pantoate with beta-alanine in an ATP-dependent reaction via a pantoyl-adenylate intermediate. Catalyzes the transfer of a phosphate group from ATP to either CMP or dCMP to form CDP or dCDP and ADP, respectively. The polypeptide is Bifunctional pantoate ligase/cytidylate kinase (Prochlorococcus marinus (strain MIT 9313)).